A 173-amino-acid chain; its full sequence is Shikimate kinase (173 aa).

G14–T19 lines the ATP pocket. Residue S18 coordinates Mg(2+). Substrate is bound by residues D36, R60, and G82. R120 contacts ATP. R140 contributes to the substrate binding site. ATP is bound at residue Q157.

The protein belongs to the shikimate kinase family. Monomer. The cofactor is Mg(2+).

The protein resides in the cytoplasm. It catalyses the reaction shikimate + ATP = 3-phosphoshikimate + ADP + H(+). It functions in the pathway metabolic intermediate biosynthesis; chorismate biosynthesis; chorismate from D-erythrose 4-phosphate and phosphoenolpyruvate: step 5/7. Functionally, catalyzes the specific phosphorylation of the 3-hydroxyl group of shikimic acid using ATP as a cosubstrate. The sequence is that of Shikimate kinase from Baumannia cicadellinicola subsp. Homalodisca coagulata.